The following is a 394-amino-acid chain: Phosphoglycerate kinase (394 aa).

Substrate-binding positions include 21–23, Arg-36, 59–62, Arg-118, and Arg-151; these read DFN and HLGR. Ser-183 bears the Phosphoserine mark. ATP is bound by residues Lys-201 and Gly-292. A Phosphothreonine modification is found at Thr-299. ATP is bound by residues Glu-323 and 350-353; that span reads GGDS.

The protein belongs to the phosphoglycerate kinase family. In terms of assembly, monomer.

It localises to the cytoplasm. The enzyme catalyses (2R)-3-phosphoglycerate + ATP = (2R)-3-phospho-glyceroyl phosphate + ADP. It functions in the pathway carbohydrate degradation; glycolysis; pyruvate from D-glyceraldehyde 3-phosphate: step 2/5. The protein is Phosphoglycerate kinase (pgk) of Priestia megaterium (strain DSM 319 / IMG 1521) (Bacillus megaterium).